The following is a 358-amino-acid chain: Aurora kinase (358 aa).

Positions 1-49 (MENKATLARNIGEKRVSPRSKVNGTGKSWRISYSPQRMDGVSSGRNVSK) are disordered. Residues 20 to 35 (SKVNGTGKSWRISYSP) are compositionally biased toward polar residues. One can recognise a Protein kinase domain in the interval 100–358 (FEVGRKLGKG…PWILKNKPFW (259 aa)). ATP-binding positions include 106–114 (LGKGKFGKV) and Lys-129. The Proton acceptor role is filled by Asp-223.

The protein belongs to the protein kinase superfamily. Ser/Thr protein kinase family. Aurora subfamily.

It is found in the nucleus. Its subcellular location is the cytoplasm. The protein localises to the cytoskeleton. The protein resides in the spindle. It localises to the chromosome. It is found in the centromere. Its subcellular location is the kinetochore. The catalysed reaction is L-seryl-[protein] + ATP = O-phospho-L-seryl-[protein] + ADP + H(+). It carries out the reaction L-threonyl-[protein] + ATP = O-phospho-L-threonyl-[protein] + ADP + H(+). Component of the chromosomal passenger complex (CPC), a complex that acts as a key regulator of chromosome segregation and cytokinesis. Has a role in error-correction of aberrent kinetochore-microtubule attachments to ensure that sister kinetochores become bioriented and connect to opposite poles by promoting spindle assembly checkpoint signaling. The protein is Aurora kinase (IPL1) of Candida glabrata (strain ATCC 2001 / BCRC 20586 / JCM 3761 / NBRC 0622 / NRRL Y-65 / CBS 138) (Yeast).